Reading from the N-terminus, the 111-residue chain is DNA-binding protein MTH_1615 (111 aa).

It belongs to the PDCD5 family.

Functionally, DNA-binding protein which can interact with a randomly chosen 20-mer of double-stranded DNA. In Methanothermobacter thermautotrophicus (strain ATCC 29096 / DSM 1053 / JCM 10044 / NBRC 100330 / Delta H) (Methanobacterium thermoautotrophicum), this protein is DNA-binding protein MTH_1615.